The chain runs to 417 residues: Cytochrome b-c1 complex subunit 2, mitochondrial (417 aa).

The transit peptide at 1–22 directs the protein to the mitochondrion; sequence MTRGVPRLAVAARHFSTAEAAG.

The protein belongs to the peptidase M16 family. UQCRC2/QCR2 subfamily. As to quaternary structure, component of the ubiquinol-cytochrome c oxidoreductase (cytochrome b-c1 complex, complex III, CIII), a multisubunit enzyme composed of 3 respiratory subunits cytochrome b, cytochrome c1 and Rieske protein, 2 core protein subunits, and additional low-molecular weight protein subunits. The complex exists as an obligatory dimer and forms supercomplexes (SCs) in the inner mitochondrial membrane with cytochrome c oxidase (complex IV, CIV).

It is found in the mitochondrion inner membrane. Component of the ubiquinol-cytochrome c oxidoreductase, a multisubunit transmembrane complex that is part of the mitochondrial electron transport chain which drives oxidative phosphorylation. The respiratory chain contains 3 multisubunit complexes succinate dehydrogenase (complex II, CII), ubiquinol-cytochrome c oxidoreductase (cytochrome b-c1 complex, complex III, CIII) and cytochrome c oxidase (complex IV, CIV), that cooperate to transfer electrons derived from NADH and succinate to molecular oxygen, creating an electrochemical gradient over the inner membrane that drives transmembrane transport and the ATP synthase. The cytochrome b-c1 complex catalyzes electron transfer from ubiquinol to cytochrome c, linking this redox reaction to translocation of protons across the mitochondrial inner membrane, with protons being carried across the membrane as hydrogens on the quinol. In the process called Q cycle, 2 protons are consumed from the matrix, 4 protons are released into the intermembrane space and 2 electrons are passed to cytochrome c. The protein is Cytochrome b-c1 complex subunit 2, mitochondrial (QCR2) of Yarrowia lipolytica (strain CLIB 122 / E 150) (Yeast).